A 472-amino-acid polypeptide reads, in one-letter code: Glutamine synthetase (472 aa).

One can recognise a GS beta-grasp domain in the interval 13–101; sequence SKARFVDLRF…TCDVIDPADG (89 aa). The region spanning 108–472 is the GS catalytic domain; the sequence is PRSIARRAEA…PLEFEMYYSL (365 aa). Mg(2+)-binding residues include E133 and E135. E211 contacts ATP. The Mg(2+) site is built by E216 and E224. L-glutamate contacts are provided by residues 268–269 and G269; that span reads NG. H273 provides a ligand contact to Mg(2+). ATP contacts are provided by residues 275–277 and S277; that span reads HQS. Residues R325, E331, and R343 each coordinate L-glutamate. ATP-binding residues include R343, R348, and K356. E361 contacts Mg(2+). Residue R363 participates in L-glutamate binding. Position 401 is an O-AMP-tyrosine (Y401).

It belongs to the glutamine synthetase family. In terms of assembly, oligomer of 12 subunits arranged in the form of two hexameric ring. The cofactor is Mg(2+).

Its subcellular location is the cytoplasm. The enzyme catalyses L-glutamate + NH4(+) + ATP = L-glutamine + ADP + phosphate + H(+). Its activity is regulated as follows. The activity of this enzyme could be controlled by adenylation under conditions of abundant glutamine. Catalyzes the ATP-dependent biosynthesis of glutamine from glutamate and ammonia. In Neisseria gonorrhoeae, this protein is Glutamine synthetase.